A 652-amino-acid chain; its full sequence is Transmembrane 9 superfamily member 12 (652 aa).

Positions 1 to 20 (MFGVYRVFVLLVFVSQLCNG) are cleaved as a signal peptide. The Lumenal portion of the chain corresponds to 21 to 286 (FYLPGSYMHT…LKMEGARVHW (266 aa)). The helical transmembrane segment at 287-307 (FSILNSLMVIFFLAGIVFVIF) threads the bilayer. The Cytoplasmic segment spans residues 308-362 (LRTVRRDLTKYEELDKEAQAQMNEELSGWKLVVGDVFREPEMSKLLCIMVGDGVR). The helical transmembrane segment at 363-383 (ITGMAVVTIVFAALGFMSPAS) threads the bilayer. The Lumenal segment spans residues 384–386 (RGM). The helical transmembrane segment at 387 to 407 (LLTGMIILYLFLGIVAGYAGV) threads the bilayer. Over 408–426 (RLWRTVKGTSEGWRSLSWS) the chain is Cytoplasmic. A helical transmembrane segment spans residues 427–447 (IACFFPGIAFVILTVLNFLLW). The Lumenal segment spans residues 448-460 (SSNSTGAIPISLY). A helical transmembrane segment spans residues 461–481 (FELLALWFCISVPLTLFGGFL). At 482–510 (GTRAEAIQFPVRTNQIPREIPERKYPSWL) the chain is on the cytoplasmic side. The helical transmembrane segment at 511-531 (LVLGAGTLPFGTLFIELFFIF) threads the bilayer. Over 532–541 (SSIWLGRFYY) the chain is Lumenal. The chain crosses the membrane as a helical span at residues 542–562 (VFGFLLIVLLLLVVVCAEVSV). Residues 563-580 (VLTYMHLCVEDWRWWWKA) are Cytoplasmic-facing. A helical transmembrane segment spans residues 581-601 (FYASGSVALYVFAYSINYLVF). At 602–613 (DLQSLSGPVSAM) the chain is on the lumenal side. The chain crosses the membrane as a helical span at residues 614 to 634 (LYIGYSLLMAIAIMLATGTIG). Residues 635–652 (FLTSFYFVHYLFSSVKID) are Cytoplasmic-facing. Positions 641–646 (FVHYLF) match the Endoplasmic reticulum export signal motif. A Golgi retention signal motif is present at residues 650–652 (KID).

Belongs to the nonaspanin (TM9SF) (TC 9.A.2) family.

Its subcellular location is the endosome membrane. It localises to the golgi apparatus membrane. The polypeptide is Transmembrane 9 superfamily member 12 (Arabidopsis thaliana (Mouse-ear cress)).